The chain runs to 199 residues: MGQKAPDFTVNTSKGPVTLSSYRGKWVLLFSHPGDFTPVCTTEFIAFTERYKDFQALGVELLGLSIDSVYSHIAWIRDIKEHFGIEIPFPIIADIDKEVARQYNLIDEKSGATVRGVFIIDPNQIVRWMIYYPAETGRNIDEIIRVIKALQFNWERKLATPANWQPGQEGIEGAPSTVDASLKRDGEPGVKTWYLKFVK.

The Thioredoxin domain maps to M1–F152. The active-site Cysteine sulfenic acid (-SOH) intermediate is C40. Residue R115 participates in substrate binding.

Belongs to the peroxiredoxin family. Prx6 subfamily. Homodecamer. Pentamer of dimers that assemble into a ring structure.

The protein resides in the cytoplasm. It catalyses the reaction a hydroperoxide + [thioredoxin]-dithiol = an alcohol + [thioredoxin]-disulfide + H2O. Thiol-specific peroxidase that catalyzes the reduction of hydrogen peroxide and organic hydroperoxides to water and alcohols, respectively. Plays a role in cell protection against oxidative stress by detoxifying peroxides. This is Peroxiredoxin 2 from Thermoplasma acidophilum (strain ATCC 25905 / DSM 1728 / JCM 9062 / NBRC 15155 / AMRC-C165).